A 451-amino-acid chain; its full sequence is UPF0210 protein CA_C0479 (451 aa).

The protein belongs to the UPF0210 family. Homodimer.

The polypeptide is UPF0210 protein CA_C0479 (Clostridium acetobutylicum (strain ATCC 824 / DSM 792 / JCM 1419 / IAM 19013 / LMG 5710 / NBRC 13948 / NRRL B-527 / VKM B-1787 / 2291 / W)).